The following is a 249-amino-acid chain: Small ribosomal subunit protein eS6 (249 aa).

Basic and acidic residues predominate over residues 216 to 229; that stretch reads RMKEAKEKRQEQIA. Residues 216–249 are disordered; that stretch reads RMKEAKEKRQEQIAKRRRLSSLRASTSKSESSQK. 5 positions are modified to phosphoserine: serine 235, serine 236, serine 240, serine 244, and serine 247. Residues 236-249 show a composition bias toward low complexity; the sequence is SLRASTSKSESSQK.

It belongs to the eukaryotic ribosomal protein eS6 family. Component of the small ribosomal subunit. Ribosomal protein S6 is the major substrate of protein kinases in eukaryote ribosomes. The phosphorylation is stimulated by growth factors, tumor promoting agents, and mitogens. It is dephosphorylated at growth arrest.

Its subcellular location is the cytoplasm. Functionally, component of the 40S small ribosomal subunit. Plays an important role in controlling cell growth and proliferation through the selective translation of particular classes of mRNA. This chain is Small ribosomal subunit protein eS6 (rps6), found in Oncorhynchus mykiss (Rainbow trout).